The primary structure comprises 91 residues: UPF0250 protein NGO_0791 (91 aa).

The protein belongs to the UPF0250 family.

This chain is UPF0250 protein NGO_0791, found in Neisseria gonorrhoeae (strain ATCC 700825 / FA 1090).